A 604-amino-acid chain; its full sequence is Solute carrier family 23 member 1 (604 aa).

The tract at residues 1–29 is disordered; it reads MKAQEDPGSSKQHECPDSAGTSTRDQQAP. At 1–59 the chain is on the cytoplasmic side; that stretch reads MKAQEDPGSSKQHECPDSAGTSTRDQQAPLPAEPKFDMLYKIEDVPPWYLCILLGFQHY. A helical membrane pass occupies residues 60–80; that stretch reads LTCFSGTIAVPFLLAEALCVG. The Extracellular portion of the chain corresponds to 81–88; it reads RDQHMISQ. A helical transmembrane segment spans residues 89–109; sequence LIGTIFTCVGITTLIQTTVGI. Arg-110 is a topological domain (cytoplasmic). Residues 111–131 form a helical membrane-spanning segment; that stretch reads LPLFQASAFAFLVPAKAILAL. The Extracellular segment spans residues 132–166; it reads ERWKCPPEEEIYGNWSMPLNTSHIWHPRIREVQGA. Asn-145 and Asn-151 each carry an N-linked (GlcNAc...) asparagine glycan. A helical transmembrane segment spans residues 167–187; sequence IMVSSVVEVVIGLLGLPGALL. Residues 188-214 lie on the Cytoplasmic side of the membrane; sequence SYIGPLTVTPTVSLIGLSVFQAAGDRA. The helical transmembrane segment at 215–232 threads the bilayer; the sequence is GSHWGISACSILLIVLFS. Residues 233-236 are Extracellular-facing; the sequence is QYLR. Residues 237 to 250 constitute an intramembrane region (helical); it reads NLTFLLPVYRWGKG. Residues 251 to 257 lie on the Extracellular side of the membrane; that stretch reads LTLFRIQ. Residues 258-278 traverse the membrane as a helical segment; sequence IFKMFPIVLAIMTVWLLCYVL. Residues 279-319 lie on the Cytoplasmic side of the membrane; sequence TLTDVLPADPTVYGFQARTDARGDIMAISPWIRIPYPCQWG. The helical transmembrane segment at 320–340 threads the bilayer; the sequence is LPTVTVAAVLGMFSATLAGII. The Extracellular portion of the chain corresponds to 341–365; that stretch reads ESIGDYYACARLAGAPPPPVHAINR. Residues 366–386 form a helical membrane-spanning segment; it reads GIFTEGVCCIIAGLLGTGNGS. At 387 to 409 the chain is on the cytoplasmic side; sequence TSSSPNIGVLGITKVGSRRVVQY. Residues 410 to 430 form a helical membrane-spanning segment; that stretch reads GAGIMLILGAIGKFTALFASL. Residues 431–433 are Extracellular-facing; sequence PDP. Residues 434–454 traverse the membrane as a helical segment; the sequence is ILGGMFCTLFGMITAVGLSNL. The Cytoplasmic segment spans residues 455–464; sequence QFVDMNSSRN. A helical transmembrane segment spans residues 465–485; that stretch reads LFVLGFSMFFGLTLPNYLDSN. At 486 to 497 the chain is on the extracellular side; the sequence is PGAINTGVPEVD. A helical transmembrane segment spans residues 498–518; that stretch reads QILTVLLTTEMFVGGCLAFIL. Over 519–604 the chain is Cytoplasmic; that stretch reads DNTVPGSPEE…TETGSVCTKV (86 aa). Thr-597 carries the post-translational modification Phosphothreonine. At Ser-599 the chain carries Phosphoserine. At Thr-602 the chain carries Phosphothreonine.

It belongs to the nucleobase:cation symporter-2 (NCS2) (TC 2.A.40) family. Phosphorylated. As to expression, highly expressed in the straight segment of proximal tubules in the kidney, in intestine and liver. Detected in epithelial cells of the bronchiole and epididymis.

The protein localises to the cell membrane. It catalyses the reaction L-ascorbate(out) + 2 Na(+)(out) = L-ascorbate(in) + 2 Na(+)(in). The catalysed reaction is urate(out) + 2 Na(+)(out) = urate(in) + 2 Na(+)(in). Functionally, sodium/ascorbate cotransporter. Mediates electrogenic uptake of vitamin C, with a stoichiometry of 2 Na(+) for each ascorbate. Has retained some ancestral activity toward nucleobases such as urate, an oxidized purine. Low-affinity high-capacity sodium:urate cotransporter, may regulate serum urate levels by serving as a renal urate re-absorber. This Rattus norvegicus (Rat) protein is Solute carrier family 23 member 1 (Slc23a1).